The following is a 171-amino-acid chain: 3-hydroxyanthranilate 3,4-dioxygenase (171 aa).

Arg45 lines the O2 pocket. Residues His49, Glu55, and His93 each coordinate Fe cation. Glu55 is a substrate binding site. Residues Arg97 and Glu107 each contribute to the substrate site. A divalent metal cation contacts are provided by Cys122, Cys125, Cys159, and Cys162.

Belongs to the 3-HAO family. Requires Fe(2+) as cofactor.

The protein resides in the cytoplasm. The enzyme catalyses 3-hydroxyanthranilate + O2 = (2Z,4Z)-2-amino-3-carboxymuconate 6-semialdehyde. It participates in cofactor biosynthesis; NAD(+) biosynthesis; quinolinate from L-kynurenine: step 3/3. Its function is as follows. Catalyzes the oxidative ring opening of 3-hydroxyanthranilate to 2-amino-3-carboxymuconate semialdehyde, which spontaneously cyclizes to quinolinate. The protein is 3-hydroxyanthranilate 3,4-dioxygenase of Candida albicans (strain SC5314 / ATCC MYA-2876) (Yeast).